The following is a 126-amino-acid chain: Large ribosomal subunit protein bL17 (126 aa).

Belongs to the bacterial ribosomal protein bL17 family. In terms of assembly, part of the 50S ribosomal subunit. Contacts protein L32.

The polypeptide is Large ribosomal subunit protein bL17 (Laribacter hongkongensis (strain HLHK9)).